The sequence spans 266 residues: ATP synthase subunit a (266 aa).

The next 6 membrane-spanning stretches (helical) occupy residues 38-58 (KQMLLVLLSVVFIAVFFVLAA), 99-119 (LLFSLFFFILVNNIYGAIPLI), 126-146 (HVGGAYVLAGIVYFTWIAIGI), 162-182 (GVPWFILPIVIPIEIISNFVV), 191-211 (LFATMLAGHLIVMIAGSGIEY), and 224-244 (SVLVLAGAIAMYMLEALIMVL).

Belongs to the ATPase A chain family. As to quaternary structure, F-type ATPases have 2 components, CF(1) - the catalytic core - and CF(0) - the membrane proton channel. CF(1) has five subunits: alpha(3), beta(3), gamma(1), delta(1), epsilon(1). CF(0) has three main subunits: a(1), b(2) and c(9-12). The alpha and beta chains form an alternating ring which encloses part of the gamma chain. CF(1) is attached to CF(0) by a central stalk formed by the gamma and epsilon chains, while a peripheral stalk is formed by the delta and b chains.

The protein resides in the cell membrane. Functionally, key component of the proton channel; it plays a direct role in the translocation of protons across the membrane. The protein is ATP synthase subunit a of Pseudarthrobacter chlorophenolicus (strain ATCC 700700 / DSM 12829 / CIP 107037 / JCM 12360 / KCTC 9906 / NCIMB 13794 / A6) (Arthrobacter chlorophenolicus).